Consider the following 213-residue polypeptide: MSMDSDAKSPFQTAELAFDDPFAAFSQWMEDARGAEPNDPNAMTLATASPSGVPSARIVLLRSVDAAEHPERGFVFFTNTESRKGVEIAANPQVALLFHWKSLGRQIRIEGKAIPVAVEEAESYFHTRPRISRLGARASDQSRPLPDRKTLQKRVEEEEARYPGDDIPRPAYWSGYRVTPTVIEFWQQMPFRLHDRLVFRRQGKNWGQEKLYP.

FMN is bound by residues 57–62 (RIVLLR), 77–78 (FT), Arg83, Lys84, and Gln106. Position 62 (Arg62) interacts with substrate. Substrate is bound by residues Tyr124, Arg128, and Ser132. Residues 135–163 (GARASDQSRPLPDRKTLQKRVEEEEARYP) are disordered. 141–142 (QS) is a binding site for FMN. Residues 145-163 (LPDRKTLQKRVEEEEARYP) show a composition bias toward basic and acidic residues. FMN is bound at residue Trp186. 192–194 (RLH) contacts substrate. An FMN-binding site is contributed by Arg196.

Belongs to the pyridoxamine 5'-phosphate oxidase family. Homodimer. Requires FMN as cofactor.

The enzyme catalyses pyridoxamine 5'-phosphate + O2 + H2O = pyridoxal 5'-phosphate + H2O2 + NH4(+). It carries out the reaction pyridoxine 5'-phosphate + O2 = pyridoxal 5'-phosphate + H2O2. Its pathway is cofactor metabolism; pyridoxal 5'-phosphate salvage; pyridoxal 5'-phosphate from pyridoxamine 5'-phosphate: step 1/1. It participates in cofactor metabolism; pyridoxal 5'-phosphate salvage; pyridoxal 5'-phosphate from pyridoxine 5'-phosphate: step 1/1. Catalyzes the oxidation of either pyridoxine 5'-phosphate (PNP) or pyridoxamine 5'-phosphate (PMP) into pyridoxal 5'-phosphate (PLP). This is Pyridoxine/pyridoxamine 5'-phosphate oxidase from Granulibacter bethesdensis (strain ATCC BAA-1260 / CGDNIH1).